We begin with the raw amino-acid sequence, 400 residues long: MKKITTIFVVLLMTVALFSIGNTTAADNDSVVEEHGQLSISNGELVNERGEQVQLKGMSSHGLQWYGQFVNYESMKWLRDDWGINVFRAAMYTSSGGYIDDPSVKEKVKEAVEAAIDLDIYVIIDWHILSDNDPNIYKEEAKDFFDEMSELYGDYPNVIYEIANEPNGSDVTWGNQIKPYAEEVIPIIRNNDPNNIIIVGTGTWSQDVHHAADNQLADPNVMYAFHFYAGTHGQNLRDQVDYALDQGAAIFVSEWGTSAATGDGGVFLDEAQVWIDFMDERNLSWANWSLTHKDESSAALMPGANPTGGWTEAELSPSGTFVREKIRESASIPPSDPTPPSDPGEPDPTPPSDPGEYPAWDPNQIYTNEIVYHNGQLWQAKWWTQNQEPGDPYGPWEPLN.

A signal peptide spans methionine 1–alanine 26. Residues histidine 61, tryptophan 65 to tyrosine 66, tyrosine 92, and histidine 127 contribute to the substrate site. Glutamate 165 serves as the catalytic Proton donor. Substrate is bound at residue tyrosine 228. The active-site Nucleophile is the glutamate 254. Residues alanine 260–threonine 261, tryptophan 288, and lysine 293–glutamate 295 contribute to the substrate site. A disordered region spans residues glutamate 328–asparagine 363. Residues proline 334–aspartate 353 are compositionally biased toward pro residues. A Chitin-binding type-3 domain is found at tyrosine 357–tryptophan 396.

It belongs to the glycosyl hydrolase 5 (cellulase A) family. Monomer.

The protein resides in the secreted. The catalysed reaction is Endohydrolysis of (1-&gt;4)-beta-D-glucosidic linkages in cellulose, lichenin and cereal beta-D-glucans.. The protein is Endoglucanase 5A (cel5A) of Salipaludibacillus agaradhaerens (Bacillus agaradhaerens).